The primary structure comprises 159 residues: Phosphopantetheine adenylyltransferase (159 aa).

The protein belongs to the eukaryotic CoaD family.

The protein resides in the cytoplasm. The enzyme catalyses (R)-4'-phosphopantetheine + ATP + H(+) = 3'-dephospho-CoA + diphosphate. The protein operates within cofactor biosynthesis; coenzyme A biosynthesis. Functionally, reversibly transfers an adenylyl group from ATP to 4'-phosphopantetheine, yielding dephospho-CoA (dPCoA) and pyrophosphate. The sequence is that of Phosphopantetheine adenylyltransferase from Thermococcus gammatolerans (strain DSM 15229 / JCM 11827 / EJ3).